The chain runs to 118 residues: Large ribosomal subunit protein bL19 (118 aa).

Belongs to the bacterial ribosomal protein bL19 family.

Functionally, this protein is located at the 30S-50S ribosomal subunit interface and may play a role in the structure and function of the aminoacyl-tRNA binding site. The protein is Large ribosomal subunit protein bL19 of Saccharophagus degradans (strain 2-40 / ATCC 43961 / DSM 17024).